The chain runs to 358 residues: Spermatogenesis-associated protein 22 (358 aa).

4 stretches are compositionally biased toward polar residues: residues 1-12 (MKRNLNESSARS), 30-51 (QPLT…DSYG), 81-121 (PASA…TSLR), and 150-159 (QQQKQFQTPE). Disordered regions lie at residues 1–51 (MKRN…DSYG), 81–122 (PASA…SLRT), and 150–172 (QQQK…AEVP).

Component of a multiprotein complex with MEIOB and RPA2. Interacts with MEIOB. Interacts with the complex BRME1:HSF2BP:BRCA2. As to expression, specifically expressed in gonadal germ cells, when male and female germ cells progress through prophase of meiosis I.

Its subcellular location is the chromosome. Meiosis-specific protein required for homologous recombination in meiosis I. The polypeptide is Spermatogenesis-associated protein 22 (Mus musculus (Mouse)).